The sequence spans 67 residues: Metallothionein-B (67 aa).

This sequence belongs to the metallothionein superfamily. Type 4 family.

Functionally, metallothioneins have a high content of cysteine residues that bind various heavy metals. This Sphaerechinus granularis (Purple sea urchin) protein is Metallothionein-B.